The primary structure comprises 285 residues: NAD kinase (285 aa).

Aspartate 66 functions as the Proton acceptor in the catalytic mechanism. NAD(+) is bound by residues 66-67, 137-138, arginine 148, arginine 165, aspartate 167, and 178-183; these read DG, ND, and TAYSMS.

Belongs to the NAD kinase family. It depends on a divalent metal cation as a cofactor.

It localises to the cytoplasm. It carries out the reaction NAD(+) + ATP = ADP + NADP(+) + H(+). Its function is as follows. Involved in the regulation of the intracellular balance of NAD and NADP, and is a key enzyme in the biosynthesis of NADP. Catalyzes specifically the phosphorylation on 2'-hydroxyl of the adenosine moiety of NAD to yield NADP. This chain is NAD kinase, found in Chlorobium luteolum (strain DSM 273 / BCRC 81028 / 2530) (Pelodictyon luteolum).